We begin with the raw amino-acid sequence, 678 residues long: UvrABC system protein C (678 aa).

The 80-residue stretch at 16 to 95 (VEPGVYRFRD…IKEFDPRFNI (80 aa)) folds into the GIY-YIG domain. The UVR domain occupies 208–243 (DRLIREMEQQMTAAAEDLDFERAARLRDNIGAMRRA). Low complexity predominate over residues 649 to 667 (EAPPEPGAEAPPDSGAAAA). The segment at 649–678 (EAPPEPGAEAPPDSGAAAAVMGNDQSRVPG) is disordered.

It belongs to the UvrC family. In terms of assembly, interacts with UvrB in an incision complex.

Its subcellular location is the cytoplasm. Functionally, the UvrABC repair system catalyzes the recognition and processing of DNA lesions. UvrC both incises the 5' and 3' sides of the lesion. The N-terminal half is responsible for the 3' incision and the C-terminal half is responsible for the 5' incision. This is UvrABC system protein C from Mycolicibacterium gilvum (strain PYR-GCK) (Mycobacterium gilvum (strain PYR-GCK)).